A 122-amino-acid chain; its full sequence is Large ribosomal subunit protein uL14 (122 aa).

The protein belongs to the universal ribosomal protein uL14 family. Part of the 50S ribosomal subunit. Forms a cluster with proteins L3 and L19. In the 70S ribosome, L14 and L19 interact and together make contacts with the 16S rRNA in bridges B5 and B8.

Its function is as follows. Binds to 23S rRNA. Forms part of two intersubunit bridges in the 70S ribosome. The sequence is that of Large ribosomal subunit protein uL14 from Gluconobacter oxydans (strain 621H) (Gluconobacter suboxydans).